The following is an 839-amino-acid chain: Molybdenum cofactor sulfurase (839 aa).

The residue at position 237 (lysine 237) is an N6-(pyridoxal phosphate)lysine. The active site involves cysteine 401. Residues 651–662 (DQNYSQKQSPSM) show a composition bias toward polar residues. Positions 651–678 (DQNYSQKQSPSMPGSFPQAPSSPDPYPT) are disordered. In terms of domain architecture, MOSC spans 656–834 (QKQSPSMPGS…IMVGDAVTPS (179 aa)).

It belongs to the class-V pyridoxal-phosphate-dependent aminotransferase family. MOCOS subfamily. Pyridoxal 5'-phosphate is required as a cofactor.

The catalysed reaction is Mo-molybdopterin + L-cysteine + AH2 = thio-Mo-molybdopterin + L-alanine + A + H2O. It participates in cofactor biosynthesis; molybdopterin biosynthesis. Functionally, sulfurates the molybdenum cofactor. Sulfation of molybdenum is essential for xanthine dehydrogenase (XDH) and aldehyde oxidase (ADO) enzymes in which molybdenum cofactor is liganded by 1 oxygen and 1 sulfur atom in active form. The chain is Molybdenum cofactor sulfurase from Emericella nidulans (strain FGSC A4 / ATCC 38163 / CBS 112.46 / NRRL 194 / M139) (Aspergillus nidulans).